Reading from the N-terminus, the 243-residue chain is 7-cyano-7-deazaguanine synthase (243 aa).

18 to 28 is a binding site for ATP; sequence FSGGQDSATCL. 4 residues coordinate Zn(2+): C206, C221, C224, and C227.

The protein belongs to the QueC family. The cofactor is Zn(2+).

It catalyses the reaction 7-carboxy-7-deazaguanine + NH4(+) + ATP = 7-cyano-7-deazaguanine + ADP + phosphate + H2O + H(+). Its pathway is purine metabolism; 7-cyano-7-deazaguanine biosynthesis. In terms of biological role, catalyzes the ATP-dependent conversion of 7-carboxy-7-deazaguanine (CDG) to 7-cyano-7-deazaguanine (preQ(0)). The protein is 7-cyano-7-deazaguanine synthase of Methylorubrum extorquens (strain PA1) (Methylobacterium extorquens).